Here is a 537-residue protein sequence, read N- to C-terminus: Cytochrome P450 86A8 (537 aa).

The chain crosses the membrane as a helical span at residues 3–23 (ISTALMILSAITAYFLWLTFI). Residue Cys458 coordinates heme.

The protein belongs to the cytochrome P450 family. Requires heme as cofactor. As to expression, expressed in leaves, stems, flowers and siliques. Expressed at low levels in roots.

It localises to the membrane. The catalysed reaction is an organic molecule + reduced [NADPH--hemoprotein reductase] + O2 = an alcohol + oxidized [NADPH--hemoprotein reductase] + H2O + H(+). Its function is as follows. Catalyzes the omega-hydroxylation of various fatty acids (FA). Acts on saturated and unsaturated fatty acids with chain lengths from C12 to C18. May be involved in the biosynthesis of cutin in the epidermis which prevents post-genital organ fusions. Hydroxylated FAs may be important for trichome differentiation, establishment of apical dominance and senescence. The polypeptide is Cytochrome P450 86A8 (CYP86A8) (Arabidopsis thaliana (Mouse-ear cress)).